We begin with the raw amino-acid sequence, 178 residues long: uncharacterized protein (178 aa).

Positions 1–16 are enriched in basic and acidic residues; the sequence is MNKRTSVDASKEDLHP. Residues 1–43 form a disordered region; that stretch reads MNKRTSVDASKEDLHPADPQSGEGVPPNRKNTKTSPRGEGTAP.

This is an uncharacterized protein from Homo sapiens (Human).